A 315-amino-acid polypeptide reads, in one-letter code: Pantothenate kinase (315 aa).

94-101 provides a ligand contact to ATP; sequence GSVAVGKS.

Belongs to the prokaryotic pantothenate kinase family.

The protein resides in the cytoplasm. The catalysed reaction is (R)-pantothenate + ATP = (R)-4'-phosphopantothenate + ADP + H(+). Its pathway is cofactor biosynthesis; coenzyme A biosynthesis; CoA from (R)-pantothenate: step 1/5. This Shewanella amazonensis (strain ATCC BAA-1098 / SB2B) protein is Pantothenate kinase.